The sequence spans 291 residues: Bis(5'-nucleosyl)-tetraphosphatase, symmetrical (291 aa).

Belongs to the Ap4A hydrolase family.

It carries out the reaction P(1),P(4)-bis(5'-adenosyl) tetraphosphate + H2O = 2 ADP + 2 H(+). Its function is as follows. Hydrolyzes diadenosine 5',5'''-P1,P4-tetraphosphate to yield ADP. The polypeptide is Bis(5'-nucleosyl)-tetraphosphatase, symmetrical (Coxiella burnetii (strain Dugway 5J108-111)).